Here is a 2587-residue protein sequence, read N- to C-terminus: Fap1 adhesin (2587 aa).

The first 85 residues, Met-1–Ala-85, serve as a signal peptide directing secretion. Disordered regions lie at residues Ser-107–Val-158, Ser-173–Arg-212, Asp-515–Ser-539, and Glu-568–Val-2558. Residues Ser-107–Ser-195 form a ser-rich region 1, SRR1 region. Composition is skewed to low complexity over residues Ser-121–Val-158 and Ser-173–Ser-191. Positions Ser-191 to Thr-522 are sufficient to block adherence to beads. Over residues Gly-192–Lys-202 the composition is skewed to polar residues. Residues Gly-203–Arg-212 are compositionally biased toward basic and acidic residues. A ser-rich region 2, SRR2 region spans residues Ser-516–Ser-2561. 2 stretches are compositionally biased toward low complexity: residues Ser-519–Ser-539 and Glu-568–Ser-2545. Residues Ser-2367–Glu-2587 form a required for localization to cell wall, fimbriae formation and adherence to saliva-coated hydroxyapatite beads (SHA) but not secretion region. The short motif at Leu-2551–Gly-2555 is the LPXTG sorting signal element. At Thr-2554 the chain carries Pentaglycyl murein peptidoglycan amidated threonine. The propeptide at Gly-2555–Glu-2587 is removed by sortase.

Belongs to the serine-rich repeat protein (SRRP) family. In terms of processing, glycosylated; occurs within the cytoplasm. It is probable that most of the Ser residues in SSR1 and SSR2 are O-GlcNAcylated. Sequential glycosylation by sugar transferases are able to generate complex sugar polymorphisms.

Its subcellular location is the cytoplasm. The protein resides in the secreted. It localises to the cell wall. The protein localises to the fimbrium. Its function is as follows. The major structural element of fimbriae. Required for adherence to saliva-coated hydroxyapatite beads (SHA), an in vitro tooth model. A Fap1-dependent increase in adherence is seen as the pH is reduced from pH 8 to pH 5. The chain is Fap1 adhesin (fap1) from Streptococcus parasanguinis.